The chain runs to 147 residues: Large ribosomal subunit protein uL13 (147 aa).

This sequence belongs to the universal ribosomal protein uL13 family. In terms of assembly, part of the 50S ribosomal subunit.

Functionally, this protein is one of the early assembly proteins of the 50S ribosomal subunit, although it is not seen to bind rRNA by itself. It is important during the early stages of 50S assembly. In Rhodococcus jostii (strain RHA1), this protein is Large ribosomal subunit protein uL13.